Here is a 185-residue protein sequence, read N- to C-terminus: MAEDRFPGWHGTTILAVRRGGEVVVAGDGQVSLGQTVIKGTARKVRRLSPGGHEVVAGFAGSTADAFTLLERLEKKLEAASGQLARACVELAKDWRMDKYLRNLEAMLIVTDGETLLVITGAGDVLEPEHDVTAIGSGGNFALAAARGLMATDLPAEEVARKAMAIAADICVYTNGNLTVERISK.

Residue Thr12 is part of the active site. 3 residues coordinate Na(+): Ala168, Cys171, and Thr174.

This sequence belongs to the peptidase T1B family. HslV subfamily. In terms of assembly, a double ring-shaped homohexamer of HslV is capped on each side by a ring-shaped HslU homohexamer. The assembly of the HslU/HslV complex is dependent on binding of ATP.

The protein localises to the cytoplasm. The catalysed reaction is ATP-dependent cleavage of peptide bonds with broad specificity.. With respect to regulation, allosterically activated by HslU binding. In terms of biological role, protease subunit of a proteasome-like degradation complex believed to be a general protein degrading machinery. This is ATP-dependent protease subunit HslV from Cereibacter sphaeroides (strain ATCC 17025 / ATH 2.4.3) (Rhodobacter sphaeroides).